We begin with the raw amino-acid sequence, 336 residues long: Serpentine receptor class gamma-13 (336 aa).

The next 8 membrane-spanning stretches (helical) occupy residues 32-52 (LKYIIQVTLLSINFILNFLII), 68-88 (FFIIYAADLIMGMYMSLSEIL), 93-113 (FIYVTLLCPILAPYFFTPSIF), 133-153 (VFLSFNRMTCVVFPVGYSAIW), 156-176 (ILTPIIIVLFVLPIGIIWNVL), 210-230 (FIVSLILIIVISGVTLYALLI), 246-266 (TMVLSLEFSFLSVIQIYFAFF), and 277-297 (LLRVMYFTYDLLNFSTTIIFI).

This sequence belongs to the nematode receptor-like protein srg family.

The protein resides in the membrane. In Caenorhabditis elegans, this protein is Serpentine receptor class gamma-13 (srg-13).